The chain runs to 892 residues: Polyribonucleotide nucleotidyltransferase (892 aa).

Positions 407 to 427 (YMHNYEMPPYSTGETGRVGSP) are disordered. Positions 521 and 527 each coordinate Mg(2+). Residues 587–646 (PRIITTTVPVDKIGEVIGPKGKMINQIQEDTGAEIAIEDDGTVYISSEGGEAAEKAKEII) enclose the KH domain. An S1 motif domain is found at 658-730 (GETYNGKVVK…DRGKISLAIP (73 aa)). Residues 727 to 892 (LAIPGFEDQE…VRRDFDPFED (166 aa)) form a disordered region. Basic and acidic residues-rich tracts occupy residues 739-844 (APRR…DRRS) and 851-877 (RRDD…ERSE).

The protein belongs to the polyribonucleotide nucleotidyltransferase family. The cofactor is Mg(2+).

It localises to the cytoplasm. The enzyme catalyses RNA(n+1) + phosphate = RNA(n) + a ribonucleoside 5'-diphosphate. Functionally, involved in mRNA degradation. Catalyzes the phosphorolysis of single-stranded polyribonucleotides processively in the 3'- to 5'-direction. In Bifidobacterium adolescentis (strain ATCC 15703 / DSM 20083 / NCTC 11814 / E194a), this protein is Polyribonucleotide nucleotidyltransferase.